Here is a 759-residue protein sequence, read N- to C-terminus: MPNLLSRNPFHGHHNDHHHDRENSSNNPPQLIRSSKSFLNFIGRKQSNDSLRSEKSTDSMKSTTTTTNYTTTNLNNNTHSHSNATSISTNNYNNNYETNHHHNISHGLHDYTSPASPKQTHSMAELKRFFRPSVNKKLSMSQLRSKKHSTHSPPPSKSTSTVNLNNHYRAQHPHGFTDHYAHTQSAIPPSTDSILSLSNNINIYHDDCILAQKYGKLGKLLGSGAGGSVKVLVRPTDGATFAVKEFRPRKPNESVKEYAKKCTAEFCIGSTLHHPNVIETVDVFSDSKQNKYYEVMEYCPIDFFAVVMTGKMSRGEINCCLKQLTEGVKYLHSMGLAHRDLKLDNCVMTSQGILKLIDFGSAVVFRYPFEDGVTMAHGIVGSDPYLAPEVITSTKSYDPQCVDIWSIGIIYCCMVLKRFPWKAPRDSDDNFRLYCMPDDIEHDYVESARHHEELLKERKEKRQRFLNHSDCSAINQQQPAHESNLKTVQNQVPNTPASIQGKSDNKPDIVEEETEENKEDDSNNDKESTPDNDKESTIDIKISKNENKSTVVSANPKKVDADADADCDANGDSNGRVDCKANSDCNDKTDCNANNDCSNESDCNAKVDTNVNTAANANPDMVPQNNPQQQQQQQQQQQQQQQQQQQQHHHHQHQNQDKAHSIASDNKSSQQHRGPHHKKIIHGPYRLLRLLPHASRPIMSRILQVDPKKRATLDDIFNDEWFAAIAACTMDSKNKVIRAPGHHHTLVREENAHLETYKV.

Positions 1–32 (MPNLLSRNPFHGHHNDHHHDRENSSNNPPQLI) are disordered. Ser-37 bears the Phosphoserine mark. Positions 45-162 (KQSNDSLRSE…PPPSKSTSTV (118 aa)) are disordered. Over residues 59–97 (SMKSTTTTTNYTTTNLNNNTHSHSNATSISTNNYNNNYE) the composition is skewed to low complexity. Positions 113–122 (SPASPKQTHS) are enriched in polar residues. Residues 215–722 (GKLGKLLGSG…LDDIFNDEWF (508 aa)) enclose the Protein kinase domain. ATP contacts are provided by residues 221–229 (LGSGAGGSV) and Lys-244. Residue Asp-340 is the Proton acceptor of the active site. Residues Ser-382 and Ser-472 each carry the phosphoserine modification. Polar residues predominate over residues 493-502 (PNTPASIQGK). 2 disordered regions span residues 493–578 (PNTP…GRVD) and 614–682 (AANA…KIIH). Thr-495 carries the post-translational modification Phosphothreonine. Ser-498 is subject to Phosphoserine. Acidic residues predominate over residues 510-519 (VEEETEENKE). Positions 520–547 (DDSNNDKESTPDNDKESTIDIKISKNEN) are enriched in basic and acidic residues. Over residues 614-646 (AANANPDMVPQNNPQQQQQQQQQQQQQQQQQQQ) the composition is skewed to low complexity. Over residues 663–672 (ASDNKSSQQH) the composition is skewed to polar residues.

Belongs to the protein kinase superfamily. Ser/Thr protein kinase family.

It is found in the cytoplasm. It catalyses the reaction L-seryl-[protein] + ATP = O-phospho-L-seryl-[protein] + ADP + H(+). The catalysed reaction is L-threonyl-[protein] + ATP = O-phospho-L-threonyl-[protein] + ADP + H(+). Functionally, involved in regulating the activity of the plasma membrane proton pump PMA1. This chain is Serine/threonine-protein kinase HRK1 (HRK1), found in Saccharomyces cerevisiae (strain ATCC 204508 / S288c) (Baker's yeast).